The following is a 402-amino-acid chain: NADH-quinone oxidoreductase subunit D 2 (402 aa).

The protein belongs to the complex I 49 kDa subunit family. As to quaternary structure, NDH-1 is composed of 14 different subunits. Subunits NuoB, C, D, E, F, and G constitute the peripheral sector of the complex.

The protein resides in the cell inner membrane. The enzyme catalyses a quinone + NADH + 5 H(+)(in) = a quinol + NAD(+) + 4 H(+)(out). Functionally, NDH-1 shuttles electrons from NADH, via FMN and iron-sulfur (Fe-S) centers, to quinones in the respiratory chain. The immediate electron acceptor for the enzyme in this species is believed to be ubiquinone. Couples the redox reaction to proton translocation (for every two electrons transferred, four hydrogen ions are translocated across the cytoplasmic membrane), and thus conserves the redox energy in a proton gradient. The chain is NADH-quinone oxidoreductase subunit D 2 from Nitrobacter hamburgensis (strain DSM 10229 / NCIMB 13809 / X14).